The primary structure comprises 468 residues: UDP-glucosyl transferase 74CD1 (468 aa).

Residue glycine 20 coordinates UDP-alpha-D-glucose. Histidine 21 serves as the catalytic Proton acceptor. Residue aspartate 114 is the Charge relay of the active site. UDP-alpha-D-glucose-binding residues include serine 292, tryptophan 344, glutamine 347, histidine 362, tryptophan 365, asparagine 366, serine 367, glutamate 370, aspartate 386, and glutamine 387.

It belongs to the UDP-glycosyltransferase family. In terms of tissue distribution, mainly expressed in flowers, flower buds and young leaves, and, to a lesser extent, in old leaves, stems and roots.

It functions in the pathway secondary metabolite biosynthesis; terpenoid biosynthesis. In terms of biological role, component of the oleanane-type triterpene saponins (e.g. saponarioside A and saponarioside B) biosynthetic pathway, leading to the production of natural products with detergent properties used as traditional sources of soap. A glycosyltransferase that, together with SDR1, mediates the conversion of QA-tri to QA-triF; UGT74CD1 may transfer 4-keto-6-deoxy-glucose to QA-tri, which is in turn reduced to D-fucose by SDR1, thus leading to QA-triF formation via the initiation of the C-28 sugar chain. This Saponaria officinalis (Common soapwort) protein is UDP-glucosyl transferase 74CD1.